Reading from the N-terminus, the 185-residue chain is ATP synthase subunit b, chloroplastic (185 aa).

The helical transmembrane segment at 31-49 (LINSGVVLGLPVYSGKGVL) threads the bilayer.

Belongs to the ATPase B chain family. As to quaternary structure, F-type ATPases have 2 components, F(1) - the catalytic core - and F(0) - the membrane proton channel. F(1) has five subunits: alpha(3), beta(3), gamma(1), delta(1), epsilon(1). F(0) has four main subunits: a(1), b(1), b'(1) and c(10-14). The alpha and beta chains form an alternating ring which encloses part of the gamma chain. F(1) is attached to F(0) by a central stalk formed by the gamma and epsilon chains, while a peripheral stalk is formed by the delta, b and b' chains.

The protein resides in the plastid. The protein localises to the chloroplast thylakoid membrane. F(1)F(0) ATP synthase produces ATP from ADP in the presence of a proton or sodium gradient. F-type ATPases consist of two structural domains, F(1) containing the extramembraneous catalytic core and F(0) containing the membrane proton channel, linked together by a central stalk and a peripheral stalk. During catalysis, ATP synthesis in the catalytic domain of F(1) is coupled via a rotary mechanism of the central stalk subunits to proton translocation. Its function is as follows. Component of the F(0) channel, it forms part of the peripheral stalk, linking F(1) to F(0). This chain is ATP synthase subunit b, chloroplastic, found in Huperzia lucidula (Shining clubmoss).